A 224-amino-acid polypeptide reads, in one-letter code: Protein YiiM (224 aa).

The MOSC domain maps to 26–163; it reads IQVDGELMLT…VSADAPLELV (138 aa).

Monomer.

The protein is Protein YiiM (yiiM) of Escherichia coli (strain K12).